The sequence spans 226 residues: Transcriptional regulatory protein PcoR (226 aa).

The Response regulatory domain maps to Arg-3 to Leu-117. Position 52 is a 4-aspartylphosphate (Asp-52). Positions Ala-125–Ile-223 form a DNA-binding region, ompR/PhoB-type.

Post-translationally, phosphorylated by PcoS.

Its subcellular location is the cytoplasm. In terms of biological role, probable member of a two-component regulatory system PcoS/PcoR. May be involved in the activation of copper resistance gene operon pcoABCD by binding to a specific site on the cop operon promoter (copper box). In Escherichia coli, this protein is Transcriptional regulatory protein PcoR (pcoR).